The sequence spans 741 residues: Catalase-peroxidase 2 (741 aa).

The N-terminal stretch at 1–28 (MQKKRIGKSVVAALAIIAMSAGTVAAWA) is a signal peptide. The segment at residues 107–228 (WHGAGTYRTY…LAATQMGLIY (122 aa)) is a cross-link (tryptophyl-tyrosyl-methioninium (Trp-Tyr) (with M-254)). His-108 (proton acceptor) is an active-site residue. Positions 228–254 (YVNPEGPNGNPDPVAAAKDIREAFGRM) form a cross-link, tryptophyl-tyrosyl-methioninium (Tyr-Met) (with W-107). Residue His-269 coordinates heme b.

This sequence belongs to the peroxidase family. Peroxidase/catalase subfamily. Homodimer or homotetramer. Heme b is required as a cofactor. In terms of processing, formation of the three residue Trp-Tyr-Met cross-link is important for the catalase, but not the peroxidase activity of the enzyme.

The catalysed reaction is H2O2 + AH2 = A + 2 H2O. It carries out the reaction 2 H2O2 = O2 + 2 H2O. In terms of biological role, bifunctional enzyme with both catalase and broad-spectrum peroxidase activity. This Burkholderia ambifaria (strain MC40-6) protein is Catalase-peroxidase 2.